The chain runs to 57 residues: DNA-directed RNA polymerase subunit Rpo6 (57 aa).

The protein belongs to the archaeal Rpo6/eukaryotic RPB6 RNA polymerase subunit family. As to quaternary structure, part of the RNA polymerase complex.

It is found in the cytoplasm. It catalyses the reaction RNA(n) + a ribonucleoside 5'-triphosphate = RNA(n+1) + diphosphate. In terms of biological role, DNA-dependent RNA polymerase (RNAP) catalyzes the transcription of DNA into RNA using the four ribonucleoside triphosphates as substrates. This Methanocaldococcus jannaschii (strain ATCC 43067 / DSM 2661 / JAL-1 / JCM 10045 / NBRC 100440) (Methanococcus jannaschii) protein is DNA-directed RNA polymerase subunit Rpo6.